A 238-amino-acid polypeptide reads, in one-letter code: Deoxyribose-phosphate aldolase (238 aa).

Asp-102 (proton donor/acceptor) is an active-site residue. The active-site Schiff-base intermediate with acetaldehyde is the Lys-164. The active-site Proton donor/acceptor is the Lys-193.

This sequence belongs to the DeoC/FbaB aldolase family. DeoC type 1 subfamily.

The protein localises to the cytoplasm. The catalysed reaction is 2-deoxy-D-ribose 5-phosphate = D-glyceraldehyde 3-phosphate + acetaldehyde. The protein operates within carbohydrate degradation; 2-deoxy-D-ribose 1-phosphate degradation; D-glyceraldehyde 3-phosphate and acetaldehyde from 2-deoxy-alpha-D-ribose 1-phosphate: step 2/2. In terms of biological role, catalyzes a reversible aldol reaction between acetaldehyde and D-glyceraldehyde 3-phosphate to generate 2-deoxy-D-ribose 5-phosphate. This chain is Deoxyribose-phosphate aldolase, found in Rhodospirillum rubrum (strain ATCC 11170 / ATH 1.1.1 / DSM 467 / LMG 4362 / NCIMB 8255 / S1).